A 319-amino-acid polypeptide reads, in one-letter code: Beta-ketoacyl-[acyl-carrier-protein] synthase III (319 aa).

Catalysis depends on residues Cys-113 and His-246. The ACP-binding stretch occupies residues 247–251; the sequence is QANLR. Residue Asn-276 is part of the active site.

This sequence belongs to the thiolase-like superfamily. FabH family. Homodimer.

The protein resides in the cytoplasm. The enzyme catalyses malonyl-[ACP] + acetyl-CoA + H(+) = 3-oxobutanoyl-[ACP] + CO2 + CoA. The protein operates within lipid metabolism; fatty acid biosynthesis. Its function is as follows. Catalyzes the condensation reaction of fatty acid synthesis by the addition to an acyl acceptor of two carbons from malonyl-ACP. Catalyzes the first condensation reaction which initiates fatty acid synthesis and may therefore play a role in governing the total rate of fatty acid production. Possesses both acetoacetyl-ACP synthase and acetyl transacylase activities. Its substrate specificity determines the biosynthesis of branched-chain and/or straight-chain of fatty acids. The polypeptide is Beta-ketoacyl-[acyl-carrier-protein] synthase III (Laribacter hongkongensis (strain HLHK9)).